A 135-amino-acid chain; its full sequence is MVSRDFDRDKRLLTARQFSAVFDSPIGKVPGKHVLLLARENGLDHPRLGLVIGKKNVKLAVQRNRLKRLIRESFRHNQETLAGWDIVVIARKGLGELENPELHQQFGKLWKRLLRNRPRTESPADAPGVADGTHA.

This sequence belongs to the RnpA family. As to quaternary structure, consists of a catalytic RNA component (M1 or rnpB) and a protein subunit.

The catalysed reaction is Endonucleolytic cleavage of RNA, removing 5'-extranucleotides from tRNA precursor.. Functionally, RNaseP catalyzes the removal of the 5'-leader sequence from pre-tRNA to produce the mature 5'-terminus. It can also cleave other RNA substrates such as 4.5S RNA. The protein component plays an auxiliary but essential role in vivo by binding to the 5'-leader sequence and broadening the substrate specificity of the ribozyme. The protein is Ribonuclease P protein component of Pseudomonas aeruginosa (strain LESB58).